A 338-amino-acid polypeptide reads, in one-letter code: NADPH dehydrogenase (338 aa).

Position 23–26 (23–26 (SPMC)) interacts with FMN. Substrate is bound at residue Tyr-28. Residues Ala-60 and Gln-102 each coordinate FMN. Residue 164-167 (HGAH) coordinates substrate. FMN-binding positions include Arg-215 and 307–308 (GR).

It belongs to the NADH:flavin oxidoreductase/NADH oxidase family. NamA subfamily. Homotetramer. FMN serves as cofactor.

The enzyme catalyses A + NADPH + H(+) = AH2 + NADP(+). In terms of biological role, catalyzes the reduction of the double bond of an array of alpha,beta-unsaturated aldehydes and ketones. It also reduces the nitro group of nitroester and nitroaromatic compounds. It could have a role in detoxification processes. The sequence is that of NADPH dehydrogenase from Bacillus pumilus (strain SAFR-032).